Reading from the N-terminus, the 244-residue chain is 7-cyano-7-deazaguanine synthase (244 aa).

14 to 24 (FSGGQDSATCV) lines the ATP pocket. Cys202, Cys217, Cys220, and Cys223 together coordinate Zn(2+).

This sequence belongs to the QueC family. Requires Zn(2+) as cofactor.

The enzyme catalyses 7-carboxy-7-deazaguanine + NH4(+) + ATP = 7-cyano-7-deazaguanine + ADP + phosphate + H2O + H(+). It participates in purine metabolism; 7-cyano-7-deazaguanine biosynthesis. In terms of biological role, catalyzes the ATP-dependent conversion of 7-carboxy-7-deazaguanine (CDG) to 7-cyano-7-deazaguanine (preQ(0)). The sequence is that of 7-cyano-7-deazaguanine synthase from Burkholderia cenocepacia (strain HI2424).